Reading from the N-terminus, the 164-residue chain is Phosphopantetheine adenylyltransferase (164 aa).

T10 is a binding site for substrate. Residues 10-11 and H18 contribute to the ATP site; that span reads TF. Substrate contacts are provided by K44, L76, and R90. ATP-binding positions include 91–93, E101, and 126–132; these read GLR and YAFISSS.

The protein belongs to the bacterial CoaD family. As to quaternary structure, homohexamer. It depends on Mg(2+) as a cofactor.

The protein resides in the cytoplasm. The enzyme catalyses (R)-4'-phosphopantetheine + ATP + H(+) = 3'-dephospho-CoA + diphosphate. Its pathway is cofactor biosynthesis; coenzyme A biosynthesis; CoA from (R)-pantothenate: step 4/5. In terms of biological role, reversibly transfers an adenylyl group from ATP to 4'-phosphopantetheine, yielding dephospho-CoA (dPCoA) and pyrophosphate. In Halorhodospira halophila (strain DSM 244 / SL1) (Ectothiorhodospira halophila (strain DSM 244 / SL1)), this protein is Phosphopantetheine adenylyltransferase.